Here is a 918-residue protein sequence, read N- to C-terminus: Non-lysosomal glucosylceramidase (918 aa).

The segment at 886–918 (HKKSRRPSVTQGTGLSTQPECGPKRSLANLNSE) is disordered. Polar residues predominate over residues 892–904 (PSVTQGTGLSTQP). Ser893 carries the post-translational modification Phosphoserine.

The protein belongs to the non-lysosomal glucosylceramidase family. Widely expressed at low level. Highly expressed in testis and brain. Ubiquitously expressed in the brain (at protein level). Expressed by Sertoli cells (at protein level).

It is found in the endoplasmic reticulum membrane. The protein localises to the golgi apparatus membrane. The catalysed reaction is a beta-D-glucosyl-(1&lt;-&gt;1')-N-acylsphing-4-enine + H2O = an N-acylsphing-4-enine + D-glucose. It carries out the reaction a beta-D-galactosyl-(1&lt;-&gt;1')-N-acylsphing-4-enine + H2O = an N-acylsphing-4-enine + D-galactose. It catalyses the reaction beta-D-glucosyl-(1-&gt;3)-O-lithocholate + H2O = lithocholate + D-glucose. The enzyme catalyses beta-D-glucosyl-(1-&gt;3)-O-chenodeoxycholate + H2O = chenodeoxycholate + D-glucose. The catalysed reaction is a di-trans,poly-cis-dolichyl beta-D-glucosyl phosphate + chenodeoxycholate = beta-D-glucosyl-(1-&gt;3)-O-chenodeoxycholate + a di-trans,poly-cis-dolichyl phosphate + H(+). It carries out the reaction octyl beta-D-glucose + chenodeoxycholate = beta-D-glucosyl-(1-&gt;3)-O-chenodeoxycholate + octan-1-ol. It catalyses the reaction cholesteryl 3-beta-D-glucoside + H2O = cholesterol + D-glucose. The enzyme catalyses a beta-D-glucosyl-(1&lt;-&gt;1')-N-acylsphing-4-enine + cholesterol = cholesteryl 3-beta-D-glucoside + an N-acylsphing-4-enine. The catalysed reaction is beta-D-glucosyl-N-(9Z-octadecenoyl)-sphing-4E-enine + cholesterol = N-(9Z-octadecenoyl)-sphing-4-enine + cholesteryl 3-beta-D-glucoside. It carries out the reaction a beta-D-galactosyl-(1&lt;-&gt;1')-N-acylsphing-4-enine + cholesterol = cholesteryl 3-beta-D-galactoside + an N-acylsphing-4-enine. It catalyses the reaction 1-(beta-D-galactosyl)-N-dodecanoylsphing-4-enine + cholesterol = cholesteryl 3-beta-D-galactoside + N-dodecanoylsphing-4-enine. It functions in the pathway lipid metabolism; sphingolipid metabolism. It participates in steroid metabolism; cholesterol metabolism. Enzymatic activity is dependent on membrane association and requires the presence of lipids. Inhibited by N-(adamantanemethyloxypentyl)-deoxynojirimycin/AMP-DNM. Inhibited by its product sphingosine/N-acylsphing-4-enine in a feedback loop. Also inhibited by other non-acetylated sphingoid bases and their derivatives but not by sphingosine-1-phosphate and complex sphingolipids. Functionally, non-lysosomal glucosylceramidase that catalyzes the hydrolysis of glucosylceramides/GlcCers (such as beta-D-glucosyl-(1&lt;-&gt;1')-N-acylsphing-4-enine) to free glucose and ceramides (such as N-acylsphing-4-enine). GlcCers are membrane glycosphingolipids that have a wide intracellular distribution. They are the main precursors of more complex glycosphingolipids that play a role in cellular growth, differentiation, adhesion, signaling, cytoskeletal dynamics and membrane properties. Also involved in the transglucosylation of cholesterol, transferring glucose from GlcCer, thereby modifying its water solubility and biological properties. Under specific conditions, may catalyze the reverse reaction, transferring glucose from cholesteryl-3-beta-D-glucoside to ceramide (such as N-acylsphing-4-enine). May play a role in the metabolism of bile acids. Able to hydrolyze bile acid 3-O-glucosides as well as to produce bile acid-glucose conjugates thanks to a bile acid glucosyl transferase activity. Catalyzes the hydrolysis of galactosylceramides/GalCers (such as beta-D-galactosyl-(1&lt;-&gt;1')-N-acylsphing-4-enine), as well as galactosyl transfer between GalCers and cholesterol in vitro with lower activity compared with their activity against GlcCers. In Mus musculus (Mouse), this protein is Non-lysosomal glucosylceramidase.